Consider the following 160-residue polypeptide: Transcriptional regulator MraZ (160 aa).

SpoVT-AbrB domains are found at residues 5–51 (TFEK…GKAL) and 80–123 (MAKL…EREA).

Belongs to the MraZ family. As to quaternary structure, forms oligomers.

It is found in the cytoplasm. It localises to the nucleoid. The chain is Transcriptional regulator MraZ from Phenylobacterium zucineum (strain HLK1).